The following is a 54-amino-acid chain: Califin-B (54 aa).

A disulfide bridge links Cys-25 with Cys-53. Leu-36 bears the Leucine amide mark.

Belongs to the molluscan ELH family. This protein consists of a large 36-residue subunit, bound by a single disulfide-bond to a small 18-residue subunit.

The protein resides in the secreted. Functionally, injected in sexually mature animals califin B excites LB and LC cells of the abdominal ganglion and cause egg-laying. This chain is Califin-B, found in Aplysia californica (California sea hare).